The following is a 982-amino-acid chain: Mitochondrial DNA mismatch repair protein mutS homolog (982 aa).

698–705 (SVNGAGKS) contacts ATP. The region spanning 905-951 (CEICGAPADAVHHIKPKSEHKKLCNRKLNRRSNLVPVCSSCHLDIHR) is the HNH domain.

The protein belongs to the DNA mismatch repair MutS family.

The protein resides in the mitochondrion. Its function is as follows. May be involved in DNA-mismatch repair. This chain is Mitochondrial DNA mismatch repair protein mutS homolog, found in Sarcophyton glaucum (Toadstool umbrella leather coral).